Consider the following 333-residue polypeptide: uncharacterized protein (333 aa).

This is an uncharacterized protein from Mycolicibacterium smegmatis (Mycobacterium smegmatis).